A 159-amino-acid polypeptide reads, in one-letter code: ATP synthase subunit b (159 aa).

A helical membrane pass occupies residues 8 to 28 (ILATIINFIILILILKHFFWD).

This sequence belongs to the ATPase B chain family. F-type ATPases have 2 components, F(1) - the catalytic core - and F(0) - the membrane proton channel. F(1) has five subunits: alpha(3), beta(3), gamma(1), delta(1), epsilon(1). F(0) has three main subunits: a(1), b(2) and c(10-14). The alpha and beta chains form an alternating ring which encloses part of the gamma chain. F(1) is attached to F(0) by a central stalk formed by the gamma and epsilon chains, while a peripheral stalk is formed by the delta and b chains.

It is found in the cell membrane. F(1)F(0) ATP synthase produces ATP from ADP in the presence of a proton or sodium gradient. F-type ATPases consist of two structural domains, F(1) containing the extramembraneous catalytic core and F(0) containing the membrane proton channel, linked together by a central stalk and a peripheral stalk. During catalysis, ATP synthesis in the catalytic domain of F(1) is coupled via a rotary mechanism of the central stalk subunits to proton translocation. Functionally, component of the F(0) channel, it forms part of the peripheral stalk, linking F(1) to F(0). In Clostridium perfringens (strain ATCC 13124 / DSM 756 / JCM 1290 / NCIMB 6125 / NCTC 8237 / Type A), this protein is ATP synthase subunit b.